A 309-amino-acid polypeptide reads, in one-letter code: Potassium channel subfamily K member 16 (309 aa).

Topologically, residues 1–13 (MPSAGLCSCWGGR) are cytoplasmic. Residues 14 to 34 (VLPLLLAYVCYLLLGATIFQL) traverse the membrane as a helical segment. Residues 98–116 (SFFFAGTVVTTIGYGNLAP) constitute an intramembrane region (pore-forming). The K(+) site is built by Thr108, Ile109, Gly110, and Tyr111. The interval 108-113 (TIGYGN) is selectivity filter 1. A helical membrane pass occupies residues 120–140 (AGQVFCVFYALLGIPLNVIFL). Residues 141-165 (NHLGTGLRAHLAAIERWEDRPRRSQ) lie on the Cytoplasmic side of the membrane. A helical transmembrane segment spans residues 166–186 (VLQVLGLALFLTLGTLVILIF). The segment at residues 202–221 (GFYFAFITLSTIGFGDYVVG) is an intramembrane region (pore-forming). Residues Thr212, Ile213, Gly214, and Phe215 each coordinate K(+). The segment at 212–217 (TIGFGD) is selectivity filter 2. A helical transmembrane segment spans residues 238–258 (IWILLGLAWLALILPLGPLLL). Residues 259–309 (HRCCQLWLLSLRQGCGAKAAPGRRPRRGSTAARGVQVTPQDFPISKKGLGS) lie on the Cytoplasmic side of the membrane.

This sequence belongs to the two pore domain potassium channel (TC 1.A.1.8) family. As to quaternary structure, homodimer; disulfide-linked. Heterodimer with KCNK17 and KCNK5. Highly expressed in pancreas, in both endocrine (alpha, beta, gamma, delta, and epsilon) and exocrine (acinar and ductal) cells. Expressed in pacreatic beta-cells (at protein level). Expressed in pacreatic delta-cells (at protein level). Not detectable in the other tissues tested.

Its subcellular location is the endoplasmic reticulum membrane. It localises to the cell membrane. It is found in the mitochondrion inner membrane. It carries out the reaction K(+)(in) = K(+)(out). The catalysed reaction is Rb(+)(in) = Rb(+)(out). The enzyme catalyses Cs(+)(in) = Cs(+)(out). With respect to regulation, the channel conductance is stimulated by extracellular alkaline pH. Inhibited by Ba(2+) ions, quinine, quinidine, chloroform and halothane. In terms of biological role, k(+) channel that conducts voltage-dependent outward rectifying currents upon membrane depolarization. Voltage sensing is coupled to K(+) electrochemical gradient in an 'ion flux gating' mode where outward but not inward ion flow opens the gate. Homo- and heterodimerizes to form functional channels with distinct regulatory and gating properties. In pancreatic islets, conducts K(+) countercurrents for Ca(2+) release from the endoplasmic reticulum (ER) and regulates the frequency and duration of cytosolic Ca(2+) oscillations coupled to secretion of pancreatic hormones. In pancreatic beta cells, drives ER Ca(2+) efflux, which in turn activates Ca(2+)-dependent plasma membrane K(+) slow currents and cytosolic Ca(2+) influx, overall contributing to synchronous cytosolic Ca(2+) oscillations. Limits glucose-induced cytosolic Ca(2+) oscillations coupled to second-phase INS secretion. Contributes to beta cell adaptation to acute inflammation by maintaining normal cytosolic Ca(2+) levels and INS secretion. May regulate beta cell mitochondrial Ca(2+) levels either indirectly via ER Ca(2+) efflux or directly by hyperpolarizing the mitochondrial membrane potential. Limits mitochondrial Ca(2+) oscillations and ATP production involved in glucose homeostasis upon metabolic stress. In pancreatic delta cells, limits Ca(2+)-induced Ca(2+)-release involved in somatostatin secretion and modulates islet paracrine signaling involved in glucagon secretion. Permeable to other monovalent cations such as Rb(+) and Cs(+). The polypeptide is Potassium channel subfamily K member 16 (Homo sapiens (Human)).